We begin with the raw amino-acid sequence, 137 residues long: Phosphoribosyl-AMP cyclohydrolase (137 aa).

Asp-84 is a binding site for Mg(2+). Cys-85 contributes to the Zn(2+) binding site. The Mg(2+) site is built by Asp-86 and Asp-88. Residues Cys-101 and Cys-108 each contribute to the Zn(2+) site.

The protein belongs to the PRA-CH family. In terms of assembly, homodimer. Requires Mg(2+) as cofactor. Zn(2+) serves as cofactor.

The protein localises to the cytoplasm. The enzyme catalyses 1-(5-phospho-beta-D-ribosyl)-5'-AMP + H2O = 1-(5-phospho-beta-D-ribosyl)-5-[(5-phospho-beta-D-ribosylamino)methylideneamino]imidazole-4-carboxamide. It functions in the pathway amino-acid biosynthesis; L-histidine biosynthesis; L-histidine from 5-phospho-alpha-D-ribose 1-diphosphate: step 3/9. Functionally, catalyzes the hydrolysis of the adenine ring of phosphoribosyl-AMP. The chain is Phosphoribosyl-AMP cyclohydrolase from Chlorobium chlorochromatii (strain CaD3).